We begin with the raw amino-acid sequence, 100 residues long: Ubiquitin-related modifier 1 (100 aa).

Position 100 is a 1-thioglycine (Gly100). A Glycyl lysine isopeptide (Gly-Lys) (interchain with K-? in acceptor proteins) cross-link involves residue Gly100.

This sequence belongs to the URM1 family. In terms of processing, C-terminal thiocarboxylation occurs in 2 steps, it is first acyl-adenylated (-COAMP) via the hesA/moeB/thiF part of UBA4, then thiocarboxylated (-COSH) via the rhodanese domain of UBA4.

Its subcellular location is the cytoplasm. The protein operates within tRNA modification; 5-methoxycarbonylmethyl-2-thiouridine-tRNA biosynthesis. In terms of biological role, acts as a sulfur carrier required for 2-thiolation of mcm(5)S(2)U at tRNA wobble positions of cytosolic tRNA(Lys), tRNA(Glu) and tRNA(Gln). Serves as sulfur donor in tRNA 2-thiolation reaction by being thiocarboxylated (-COSH) at its C-terminus by the MOCS3 homolog UBA4. The sulfur is then transferred to tRNA to form 2-thiolation of mcm(5)S(2)U. Prior mcm(5) tRNA modification by the elongator complex is required for 2-thiolation. Also acts as a ubiquitin-like protein (UBL) that is covalently conjugated via an isopeptide bond to lysine residues of target proteins such as AHP1. The thiocarboxylated form serves as substrate for conjugation and oxidative stress specifically induces the formation of UBL-protein conjugates. This Eremothecium gossypii (strain ATCC 10895 / CBS 109.51 / FGSC 9923 / NRRL Y-1056) (Yeast) protein is Ubiquitin-related modifier 1.